Consider the following 339-residue polypeptide: Diguanylate cyclase VdcA (339 aa).

In terms of domain architecture, GGDEF spans 206–339; that stretch reads QQVSLIMLDI…NLGRNRVMPL (134 aa). D214 is a binding site for Mg(2+). Substrate-binding residues include N222 and D231. E257 provides a ligand contact to Mg(2+). The Proton acceptor role is filled by E257.

It depends on Mg(2+) as a cofactor.

The enzyme catalyses 2 GTP = 3',3'-c-di-GMP + 2 diphosphate. It participates in purine metabolism; 3',5'-cyclic di-GMP biosynthesis. Diguanylate cyclase (DGC) that catalyzes the synthesis of cyclic diguanylate (c-di-GMP) via the condensation of 2 GTP molecules. Is involved in the modulation of intracellular c-di-GMP levels. Cyclic-di-GMP is a second messenger which positively regulates biofilm formation and negatively regulates virulence in V.cholerae, and is proposed to play an important role in the transition from persistence in the environment to survival in the host. Overexpression of vdcA results in increased biofilm formation, and reduced motility and virulence. This is Diguanylate cyclase VdcA (vdcA) from Vibrio cholerae serotype O1 (strain ATCC 39315 / El Tor Inaba N16961).